Reading from the N-terminus, the 349-residue chain is Oxygen-dependent coproporphyrinogen-III oxidase (349 aa).

2 disordered regions span residues 1-21 (MGAS…KRAR) and 37-60 (SLDG…GRSK). Ser105 lines the substrate pocket. Residues His109 and His119 each coordinate a divalent metal cation. The active-site Proton donor is the His119. A substrate-binding site is contributed by 121–123 (NYR). A divalent metal cation contacts are provided by His153 and His183. The segment at 273-308 (YAEFNLVWDRGTIFGLQTNGRTESILMSLPPLARWE) is important for dimerization.

It belongs to the aerobic coproporphyrinogen-III oxidase family. In terms of assembly, homodimer. The cofactor is a divalent metal cation.

It localises to the cytoplasm. The enzyme catalyses coproporphyrinogen III + O2 + 2 H(+) = protoporphyrinogen IX + 2 CO2 + 2 H2O. It functions in the pathway porphyrin-containing compound metabolism; protoporphyrin-IX biosynthesis; protoporphyrinogen-IX from coproporphyrinogen-III (O2 route): step 1/1. Functionally, involved in the heme and chlorophyll biosynthesis. Catalyzes the aerobic oxidative decarboxylation of propionate groups of rings A and B of coproporphyrinogen-III to yield the vinyl groups in protoporphyrinogen-IX. The polypeptide is Oxygen-dependent coproporphyrinogen-III oxidase (Prochlorococcus marinus (strain MIT 9313)).